Consider the following 274-residue polypeptide: Ciliary microtubule inner protein 2B (274 aa).

2 disordered regions span residues serine 46–valine 89 and threonine 119–arginine 171. The segment covering leucine 130–glutamate 155 has biased composition (basic and acidic residues).

This sequence belongs to the CIMIP2 family. As to quaternary structure, microtubule inner protein component of sperm flagellar doublet microtubules. As to expression, expressed in trachea multiciliated cells.

It localises to the cytoplasm. The protein localises to the cytoskeleton. Its subcellular location is the cilium axoneme. The protein resides in the flagellum axoneme. Microtubule inner protein (MIP) part of the dynein-decorated doublet microtubules (DMTs) in cilia axoneme, which is required for motile cilia beating. In Bos taurus (Bovine), this protein is Ciliary microtubule inner protein 2B (CIMIP2B).